The sequence spans 529 residues: Serine hydroxymethyltransferase 3, chloroplastic (529 aa).

The transit peptide at 1–60 (MQACCGGNSMASLQQPGRVQGSVFPPIMPPVTKFSQQLKFNISKPFRSSFLKRNLVSEMR) directs the protein to the chloroplast. N6-(pyridoxal phosphate)lysine is present on K314.

It belongs to the SHMT family. As to quaternary structure, homotetramer. The cofactor is pyridoxal 5'-phosphate.

It is found in the plastid. The protein localises to the chloroplast. The catalysed reaction is (6R)-5,10-methylene-5,6,7,8-tetrahydrofolate + glycine + H2O = (6S)-5,6,7,8-tetrahydrofolate + L-serine. Its pathway is one-carbon metabolism; tetrahydrofolate interconversion. Inhibited by 5-CH3-H4PteGlu1/5 and 5-HCO-H4PteGlu1/5 in vitro. Functionally, catalyzes the interconversion of serine and glycine and directs the hydroxymethyl moiety of serine into the metabolic network of H4PteGlu(n)-bound one-carbon units. This is Serine hydroxymethyltransferase 3, chloroplastic from Arabidopsis thaliana (Mouse-ear cress).